The chain runs to 92 residues: Small ribosomal subunit protein uS19 (92 aa).

This sequence belongs to the universal ribosomal protein uS19 family. As to quaternary structure, part of the 30S ribosomal subunit.

In terms of biological role, protein S19 forms a complex with S13 that binds strongly to the 16S ribosomal RNA. This chain is Small ribosomal subunit protein uS19 (rpsS), found in Bacillus subtilis (strain 168).